The primary structure comprises 418 residues: UDP-N-acetylglucosamine 1-carboxyvinyltransferase (418 aa).

Residue 22–23 coordinates phosphoenolpyruvate; it reads KN. Arg92 contacts UDP-N-acetyl-alpha-D-glucosamine. Cys116 functions as the Proton donor in the catalytic mechanism. Cys116 is modified (2-(S-cysteinyl)pyruvic acid O-phosphothioketal). UDP-N-acetyl-alpha-D-glucosamine contacts are provided by Asp305 and Val327.

It belongs to the EPSP synthase family. MurA subfamily.

It localises to the cytoplasm. The enzyme catalyses phosphoenolpyruvate + UDP-N-acetyl-alpha-D-glucosamine = UDP-N-acetyl-3-O-(1-carboxyvinyl)-alpha-D-glucosamine + phosphate. It functions in the pathway cell wall biogenesis; peptidoglycan biosynthesis. Cell wall formation. Adds enolpyruvyl to UDP-N-acetylglucosamine. This chain is UDP-N-acetylglucosamine 1-carboxyvinyltransferase, found in Endomicrobium trichonymphae.